The primary structure comprises 550 residues: Epidermal growth factor-like protein 6 (550 aa).

The signal sequence occupies residues 1-18 (MQPPWGLALPLLLPWVTG). The 36-residue stretch at 55 to 90 (NKGVCEAMCEPRCKFGECVGPNKCRCFPGYTGKTCT) folds into the EGF-like 1 domain. Intrachain disulfides connect Cys59/Cys72, Cys63/Cys78, Cys80/Cys89, Cys96/Cys107, Cys103/Cys116, and Cys118/Cys130. An EGF-like 2; calcium-binding domain is found at 92 to 131 (DVNECGVKPRPCQHRCVNTHGSYKCFCLSGHMLLPDATCS). The region spanning 135-171 (TCARLNCQYGCEDTEEGPRCVCPSSGLRLGPNGRVCL) is the EGF-like 3 domain. Residues 172 to 210 (DIDECASSKAVCPSNRRCVNTFGSYYCKCHIGFELKYIG) form the EGF-like 4; calcium-binding domain. 5 disulfides stabilise this stretch: Cys176-Cys189, Cys183-Cys198, Cys221-Cys234, Cys228-Cys243, and Cys245-Cys256. Positions 217 to 257 (DINECALNTHPCSPHANCLNTRGSFKCKCKQGYRGNGLQCS) constitute an EGF-like 5; calcium-binding domain. The interval 295 to 354 (KMVTPRPASTRVPKVNLPYSSEEGVSRGRNYDGEQKKKEEGKRERLEEEKGEKTLRNEVE) is disordered. Over residues 318–354 (GVSRGRNYDGEQKKKEEGKRERLEEEKGEKTLRNEVE) the composition is skewed to basic and acidic residues. The stretch at 327–357 (GEQKKKEEGKRERLEEEKGEKTLRNEVEQER) forms a coiled coil. N-linked (GlcNAc...) asparagine glycosylation occurs at Asn394. The MAM domain maps to 397-543 (VDCSFDLGVC…VLLVSGLCPD (147 aa)).

This sequence belongs to the nephronectin family. Expressed at basement membrane of pelage follicles (at protein level).

It is found in the secreted. The protein resides in the extracellular space. It localises to the extracellular matrix. The protein localises to the basement membrane. Its function is as follows. May bind integrin alpha-8/beta-1 and play a role in hair follicle morphogenesis. Promotes matrix assembly. This chain is Epidermal growth factor-like protein 6 (Egfl6), found in Mus musculus (Mouse).